Consider the following 435-residue polypeptide: Histidinol dehydrogenase (435 aa).

Residues Y131, Q189, and N212 each coordinate NAD(+). Substrate-binding residues include S238, Q260, and H263. Positions 260 and 263 each coordinate Zn(2+). Catalysis depends on proton acceptor residues E327 and H328. H328, D361, E415, and H420 together coordinate substrate. Residue D361 participates in Zn(2+) binding. H420 contacts Zn(2+).

Belongs to the histidinol dehydrogenase family. Homodimer. It depends on Zn(2+) as a cofactor.

The catalysed reaction is L-histidinol + 2 NAD(+) + H2O = L-histidine + 2 NADH + 3 H(+). The protein operates within amino-acid biosynthesis; L-histidine biosynthesis; L-histidine from 5-phospho-alpha-D-ribose 1-diphosphate: step 9/9. Functionally, catalyzes the sequential NAD-dependent oxidations of L-histidinol to L-histidinaldehyde and then to L-histidine. This is Histidinol dehydrogenase (hisD) from Buchnera aphidicola subsp. Acyrthosiphon pisum (strain APS) (Acyrthosiphon pisum symbiotic bacterium).